The chain runs to 285 residues: MTALLIDGNALSKTLRTQAAQRAAALTARGHQPGLAVVLVGANPASEVYVRNKIKACEDNGFFSHKDAYPDTLSEADLLARIDELNRDPKIHGILVQLPLPAHIDSHKVLEAIAPEKDVDGFHVANAGALMTGKPLFRPCTPYGVMKMFEAHDIPLQGANAVVIGRSNIVGKPMAMMLLEAGATVTICHSKTRDLAAHTRQADIVVAAVGKRNILTADMVKPGATVIDVGMNRDDAGKLCGDVDFAGVKEVAGHITPVPGGVGPMTITMLLINTIEAAERAAAAA.

NADP(+) contacts are provided by residues 165–167 and Ser190; that span reads GRS.

Belongs to the tetrahydrofolate dehydrogenase/cyclohydrolase family. As to quaternary structure, homodimer.

The enzyme catalyses (6R)-5,10-methylene-5,6,7,8-tetrahydrofolate + NADP(+) = (6R)-5,10-methenyltetrahydrofolate + NADPH. It catalyses the reaction (6R)-5,10-methenyltetrahydrofolate + H2O = (6R)-10-formyltetrahydrofolate + H(+). The protein operates within one-carbon metabolism; tetrahydrofolate interconversion. Its function is as follows. Catalyzes the oxidation of 5,10-methylenetetrahydrofolate to 5,10-methenyltetrahydrofolate and then the hydrolysis of 5,10-methenyltetrahydrofolate to 10-formyltetrahydrofolate. This chain is Bifunctional protein FolD, found in Burkholderia ambifaria (strain ATCC BAA-244 / DSM 16087 / CCUG 44356 / LMG 19182 / AMMD) (Burkholderia cepacia (strain AMMD)).